The chain runs to 505 residues: Lysine--tRNA ligase (505 aa).

Mg(2+) contacts are provided by Glu-415 and Glu-422.

This sequence belongs to the class-II aminoacyl-tRNA synthetase family. In terms of assembly, homodimer. The cofactor is Mg(2+).

The protein resides in the cytoplasm. It carries out the reaction tRNA(Lys) + L-lysine + ATP = L-lysyl-tRNA(Lys) + AMP + diphosphate. This chain is Lysine--tRNA ligase, found in Shigella flexneri.